The following is a 277-amino-acid chain: MPELPEVETTRRGLAPLLEGRRVTGMTVRQARLRWPVPAGLPDAITGQTIRAVDRRAKYLLFRTPAGTLILHLGMSGSLRVIPGQQAGACAVPPGRHDHVDLRLADGSCLRYTDPRRFGSLHWCTGEPEAHWLLHRLGPEPFDTAFDGDRLHRLSRGRRTSVKAFIMDSGIVVGVGNIYASESLFRAGIHPGRPAGRVGLARYRRLAGAVREVLAEAIAAGGTTLRDFTASDGRPGYFAQTLNVYGRAGAPCPRCGRSIRQRRIAQRSTWYCPGCQR.

P2 (schiff-base intermediate with DNA) is an active-site residue. E3 acts as the Proton donor in catalysis. Catalysis depends on K58, which acts as the Proton donor; for beta-elimination activity. The DNA site is built by H97, R116, and R158. Residues 243 to 277 (NVYGRAGAPCPRCGRSIRQRRIAQRSTWYCPGCQR) form an FPG-type zinc finger. The Proton donor; for delta-elimination activity role is filled by R267.

This sequence belongs to the FPG family. In terms of assembly, monomer. Zn(2+) serves as cofactor.

It catalyses the reaction Hydrolysis of DNA containing ring-opened 7-methylguanine residues, releasing 2,6-diamino-4-hydroxy-5-(N-methyl)formamidopyrimidine.. It carries out the reaction 2'-deoxyribonucleotide-(2'-deoxyribose 5'-phosphate)-2'-deoxyribonucleotide-DNA = a 3'-end 2'-deoxyribonucleotide-(2,3-dehydro-2,3-deoxyribose 5'-phosphate)-DNA + a 5'-end 5'-phospho-2'-deoxyribonucleoside-DNA + H(+). Its function is as follows. Involved in base excision repair of DNA damaged by oxidation or by mutagenic agents. Acts as a DNA glycosylase that recognizes and removes damaged bases. Has a preference for oxidized purines, such as 7,8-dihydro-8-oxoguanine (8-oxoG). Has AP (apurinic/apyrimidinic) lyase activity and introduces nicks in the DNA strand. Cleaves the DNA backbone by beta-delta elimination to generate a single-strand break at the site of the removed base with both 3'- and 5'-phosphates. This Alkalilimnicola ehrlichii (strain ATCC BAA-1101 / DSM 17681 / MLHE-1) protein is Formamidopyrimidine-DNA glycosylase.